Here is a 226-residue protein sequence, read N- to C-terminus: UPF0173 metal-dependent hydrolase TM_1162 (226 aa).

It belongs to the UPF0173 family.

The chain is UPF0173 metal-dependent hydrolase TM_1162 from Thermotoga maritima (strain ATCC 43589 / DSM 3109 / JCM 10099 / NBRC 100826 / MSB8).